The chain runs to 310 residues: Cytosolic Fe-S cluster assembly factor Nubp1 homolog (310 aa).

Positions 9, 23, 26, and 32 each coordinate [4Fe-4S] cluster. 63–70 (GKGGVGKS) is an ATP binding site. Positions 240 and 243 each coordinate [4Fe-4S] cluster.

It belongs to the Mrp/NBP35 ATP-binding proteins family. NUBP1/NBP35 subfamily. Heterotetramer of 2 Nubp1 and 2 Nubp2 chains. It depends on [4Fe-4S] cluster as a cofactor.

It localises to the cytoplasm. Its function is as follows. Component of the cytosolic iron-sulfur (Fe/S) protein assembly (CIA) machinery. Required for maturation of extramitochondrial Fe-S proteins. The Nubp1-Nubp2 heterotetramer forms a Fe-S scaffold complex, mediating the de novo assembly of an Fe-S cluster and its transfer to target apoproteins. The protein is Cytosolic Fe-S cluster assembly factor Nubp1 homolog of Drosophila mojavensis (Fruit fly).